The primary structure comprises 131 residues: MAFLPKFDAGGLVTCVTTDAATGDVLMVAHMNDEALRRTVATGEAWYFSRSRNALWRKGESSGQTQRVIEMRTDCDQDAVWLRVEQTGAACHTGRRSCFYRRVERTEADGGARLVFVDADRLFDPDAVYRK.

Position 74 (Asp-74) interacts with Mg(2+). Cys-75 is a Zn(2+) binding site. Mg(2+) contacts are provided by Asp-76 and Asp-78. Cys-91 and Cys-98 together coordinate Zn(2+).

This sequence belongs to the PRA-CH family. In terms of assembly, homodimer. It depends on Mg(2+) as a cofactor. Zn(2+) is required as a cofactor.

It localises to the cytoplasm. It catalyses the reaction 1-(5-phospho-beta-D-ribosyl)-5'-AMP + H2O = 1-(5-phospho-beta-D-ribosyl)-5-[(5-phospho-beta-D-ribosylamino)methylideneamino]imidazole-4-carboxamide. Its pathway is amino-acid biosynthesis; L-histidine biosynthesis; L-histidine from 5-phospho-alpha-D-ribose 1-diphosphate: step 3/9. In terms of biological role, catalyzes the hydrolysis of the adenine ring of phosphoribosyl-AMP. This Bradyrhizobium sp. (strain BTAi1 / ATCC BAA-1182) protein is Phosphoribosyl-AMP cyclohydrolase.